We begin with the raw amino-acid sequence, 418 residues long: D-amino acid dehydrogenase (418 aa).

An FAD-binding site is contributed by 3 to 17 (VLILGSGVVGVATAY).

It belongs to the DadA oxidoreductase family. FAD serves as cofactor.

The catalysed reaction is a D-alpha-amino acid + A + H2O = a 2-oxocarboxylate + AH2 + NH4(+). It functions in the pathway amino-acid degradation; D-alanine degradation; NH(3) and pyruvate from D-alanine: step 1/1. In terms of biological role, oxidative deamination of D-amino acids. The polypeptide is D-amino acid dehydrogenase (Granulibacter bethesdensis (strain ATCC BAA-1260 / CGDNIH1)).